Reading from the N-terminus, the 417-residue chain is D-amino acid dehydrogenase (417 aa).

3–17 lines the FAD pocket; sequence AVVLGSGVVGLMSAW.

This sequence belongs to the DadA oxidoreductase family. The cofactor is FAD.

It catalyses the reaction a D-alpha-amino acid + A + H2O = a 2-oxocarboxylate + AH2 + NH4(+). Oxidative deamination of D-amino acids. The sequence is that of D-amino acid dehydrogenase from Vibrio vulnificus (strain CMCP6).